Consider the following 242-residue polypeptide: DnaJ homolog subfamily B member 3 (242 aa).

The 69-residue stretch at methionine 1 to glycine 69 folds into the J domain.

As to expression, testis specific.

Its function is as follows. May operate as a co-chaperone of the male germ cell- and haploid stage-specific Hsp70 proteins. The sequence is that of DnaJ homolog subfamily B member 3 (DNAJB3) from Macaca fuscata fuscata (Japanese macaque).